We begin with the raw amino-acid sequence, 444 residues long: Spermatogenesis-associated protein 1 (444 aa).

A coiled-coil region spans residues 268–403; sequence SLLKIEREKI…RKLDTDKMKL (136 aa).

Interacts with IFT20. In terms of tissue distribution, highly abundant in the testis, and is also expressed in the heart and kidney (at protein level).

The protein localises to the cytoplasmic vesicle. Its subcellular location is the secretory vesicle. The protein resides in the acrosome. The polypeptide is Spermatogenesis-associated protein 1 (Spata1) (Mus musculus (Mouse)).